A 148-amino-acid chain; its full sequence is Protein F15 (148 aa).

Belongs to the poxviridae F15 protein family.

The protein is Protein F15 of Fowlpox virus (strain NVSL) (FPV).